Consider the following 528-residue polypeptide: GMP synthase [glutamine-hydrolyzing] (528 aa).

One can recognise a Glutamine amidotransferase type-1 domain in the interval 22 to 212 (AILVLDFGSQ…VFKICQSQTN (191 aa)). The active-site Nucleophile is Cys99. Active-site residues include His186 and Glu188. The region spanning 213-403 (WSLESNVETI…LGIKKEALYR (191 aa)) is the GMPS ATP-PPase domain. 240 to 246 (SGGTDSL) provides a ligand contact to ATP.

Homodimer.

It carries out the reaction XMP + L-glutamine + ATP + H2O = GMP + L-glutamate + AMP + diphosphate + 2 H(+). Its pathway is purine metabolism; GMP biosynthesis; GMP from XMP (L-Gln route): step 1/1. Catalyzes the synthesis of GMP from XMP. This chain is GMP synthase [glutamine-hydrolyzing], found in Borrelia garinii subsp. bavariensis (strain ATCC BAA-2496 / DSM 23469 / PBi) (Borreliella bavariensis).